The following is a 367-amino-acid chain: tRNA-specific 2-thiouridylase MnmA (367 aa).

ATP is bound by residues 11 to 18 and M37; that span reads AMSGGVDS. The segment at 97-99 is interaction with target base in tRNA; sequence NPD. The active-site Nucleophile is C102. C102 and C199 are joined by a disulfide. G127 provides a ligand contact to ATP. The interaction with tRNA stretch occupies residues 149–151; it reads KDQ. The active-site Cysteine persulfide intermediate is C199. The interval 311-312 is interaction with tRNA; sequence RY.

Belongs to the MnmA/TRMU family. As to quaternary structure, interacts with TusE.

It localises to the cytoplasm. It catalyses the reaction S-sulfanyl-L-cysteinyl-[protein] + uridine(34) in tRNA + AH2 + ATP = 2-thiouridine(34) in tRNA + L-cysteinyl-[protein] + A + AMP + diphosphate + H(+). Its function is as follows. Catalyzes the 2-thiolation of uridine at the wobble position (U34) of tRNA(Lys), tRNA(Glu) and tRNA(Gln), leading to the formation of s(2)U34, the first step of tRNA-mnm(5)s(2)U34 synthesis. Sulfur is provided by IscS, via a sulfur-relay system. Binds ATP and its substrate tRNAs. This Buchnera aphidicola subsp. Schizaphis graminum (strain Sg) protein is tRNA-specific 2-thiouridylase MnmA.